Reading from the N-terminus, the 131-residue chain is Holo-[acyl-carrier-protein] synthase (131 aa).

Residues Asp9 and Glu58 each contribute to the Mg(2+) site.

It belongs to the P-Pant transferase superfamily. AcpS family. It depends on Mg(2+) as a cofactor.

The protein resides in the cytoplasm. The enzyme catalyses apo-[ACP] + CoA = holo-[ACP] + adenosine 3',5'-bisphosphate + H(+). Transfers the 4'-phosphopantetheine moiety from coenzyme A to a Ser of acyl-carrier-protein. This chain is Holo-[acyl-carrier-protein] synthase, found in Salmonella arizonae (strain ATCC BAA-731 / CDC346-86 / RSK2980).